A 77-amino-acid chain; its full sequence is uncharacterized protein (77 aa).

This is an uncharacterized protein from Plasmodium falciparum (isolate fcm17 / Senegal).